Reading from the N-terminus, the 211-residue chain is FMN-dependent NADH:quinone oxidoreductase 3 (211 aa).

102–105 (MWNF) lines the FMN pocket.

Belongs to the azoreductase type 1 family. As to quaternary structure, homodimer. FMN serves as cofactor.

The catalysed reaction is 2 a quinone + NADH + H(+) = 2 a 1,4-benzosemiquinone + NAD(+). The enzyme catalyses N,N-dimethyl-1,4-phenylenediamine + anthranilate + 2 NAD(+) = 2-(4-dimethylaminophenyl)diazenylbenzoate + 2 NADH + 2 H(+). In terms of biological role, quinone reductase that provides resistance to thiol-specific stress caused by electrophilic quinones. Functionally, also exhibits azoreductase activity. Catalyzes the reductive cleavage of the azo bond in aromatic azo compounds to the corresponding amines. In Bacillus anthracis, this protein is FMN-dependent NADH:quinone oxidoreductase 3.